A 198-amino-acid chain; its full sequence is Sulfite reductase, dissimilatory-type subunit alpha (198 aa).

Residues cysteine 45, cysteine 64, cysteine 67, and cysteine 70 each contribute to the [4Fe-4S] cluster site. The 4Fe-4S ferredoxin-type domain maps to 55–83 (GTLSIDNKNCTRCMHCINTMPRALKIGDE).

In terms of assembly, heterohexamer of two alpha, two beta and two gamma subunits.

In terms of biological role, part of the complex that catalyzes the reduction of sulfite to sulfide. The alpha and beta subunits may have arisen by gene duplication. They both bind 2 iron-sulfur clusters, but the alpha subunit seems to be catalytically inactive, due to substitutions along the putative substrate access channel, and because it binds sirohydrochlorin (the dematallated form of siroheme) instead of siroheme. This chain is Sulfite reductase, dissimilatory-type subunit alpha (dsrA), found in Megalodesulfovibrio gigas (strain ATCC 19364 / DSM 1382 / NCIMB 9332 / VKM B-1759) (Desulfovibrio gigas).